Reading from the N-terminus, the 88-residue chain is Small ribosomal subunit protein uS15 (88 aa).

This sequence belongs to the universal ribosomal protein uS15 family. In terms of assembly, part of the 30S ribosomal subunit. Forms a bridge to the 50S subunit in the 70S ribosome, contacting the 23S rRNA.

Its function is as follows. One of the primary rRNA binding proteins, it binds directly to 16S rRNA where it helps nucleate assembly of the platform of the 30S subunit by binding and bridging several RNA helices of the 16S rRNA. Functionally, forms an intersubunit bridge (bridge B4) with the 23S rRNA of the 50S subunit in the ribosome. The chain is Small ribosomal subunit protein uS15 from Mycoplasma capricolum subsp. capricolum (strain California kid / ATCC 27343 / NCTC 10154).